Here is a 537-residue protein sequence, read N- to C-terminus: Zinc finger protein 703 (537 aa).

3 disordered regions span residues 1-38, 90-254, and 300-323; these read MNCS…LRQA, SQIG…VAPV, and VGNQ…LTGA. Positions 101–111 are enriched in polar residues; the sequence is SKLNSVTSSGL. A compositionally biased stretch (low complexity) spans 149 to 158; the sequence is GSSSGGAADK. Over residues 176–185 the composition is skewed to polar residues; sequence SPSSRVSSPG. Positions 188 to 203 are enriched in basic and acidic residues; that stretch reads CDSKNNESQEKKEPEA. Residues 205 to 220 are compositionally biased toward polar residues; it reads KANSETSQVNPTLTRA. Residues 221-232 show a composition bias toward low complexity; sequence STSNSSAESSQS. The C2H2-type zinc finger occupies 409 to 437; that stretch reads HICNWVSASGPCDKRFSTSEELLAHLRTH.

It belongs to the Elbow/Noc family.

Its subcellular location is the nucleus. The protein resides in the cytoplasm. Transcriptional corepressor which does not bind directly to DNA and may regulate transcription through recruitment of histone deacetylases to gene promoters. Regulates cell adhesion, migration and proliferation. Involved in specification of the lateral neural plate border (NPB). May be required for segmental gene expression during hindbrain development. In Xenopus tropicalis (Western clawed frog), this protein is Zinc finger protein 703 (znf703).